Reading from the N-terminus, the 317-residue chain is Protease 7 (317 aa).

Residues 1-20 (MRAKLLGIVLTTPIAISSFA) form the signal peptide. Over 21–31 (STETLSFTPDN) the chain is Periplasmic. Residues 32–41 (INADISLGTL) traverse the membrane as a beta stranded segment. Residues 42 to 69 (SGKTKERVYLAEEGGRKVSQLDWKFNNA) lie on the Extracellular side of the membrane. Residues 70-78 (AIIKGAINW) traverse the membrane as a beta stranded segment. Residues 79-83 (DLMPQ) are Periplasmic-facing. Residues 84 to 92 (ISIGAAGWT) traverse the membrane as a beta stranded segment. Residues 93–130 (TLGSRGGNMVDQDWMDSSNPGTWTDESRHPDTQLNYAN) are Extracellular-facing. Active-site residues include Asp-103 and Asp-105. The beta stranded transmembrane segment at 131–140 (EFDLNIKGWL) threads the bilayer. At 141–145 (LNEPN) the chain is on the periplasmic side. The chain crosses the membrane as a beta stranded span at residues 146–156 (YRLGLMAGYQE). Topologically, residues 157-197 (SRYSFTARGGSYIYSSEEGFRDDIGSFPNGERAIGYKQRFK) are extracellular. Residues 198 to 209 (MPYIGLTGSYRY) form a beta stranded membrane-spanning segment. At 210–211 (ED) the chain is on the periplasmic side. A beta stranded transmembrane segment spans residues 212–221 (FELGGTFKYS). Over 222 to 250 (GWVEASDNDEHYDPGKRITYRSKVKDQNY) the chain is Extracellular. Residues Asp-230 and His-232 contribute to the active site. Residues 251–261 (YSVSVNAGYYV) traverse the membrane as a beta stranded segment. The Periplasmic segment spans residues 262-264 (TPN). A beta stranded transmembrane segment spans residues 265 to 274 (AKVYVEGTWN). Residues 275–306 (RVTNKKGNTSLYDHNDNTSDYSKNGAGIENYN) are Extracellular-facing. The beta stranded transmembrane segment at 307-316 (FITTAGLKYT) threads the bilayer. Position 317 (Phe-317) is a topological domain, periplasmic.

The protein belongs to the peptidase A26 family. Homopentamer.

The protein localises to the cell outer membrane. The enzyme catalyses Has a virtual requirement for Arg in the P1 position and a slightly less stringent preference for this residue in the P1' position, which can also contain Lys, Gly or Val.. Its activity is regulated as follows. Inhibited by zinc. Protease that can cleave T7 RNA polymerase, ferric enterobactin receptor protein (FEP), antimicrobial peptide protamine and other proteins. This protease has a specificity for paired basic residues. In Escherichia coli O157:H7, this protein is Protease 7 (ompT).